Reading from the N-terminus, the 1386-residue chain is X-linked retinitis pigmentosa GTPase regulator homolog (1386 aa).

Disordered stretches follow at residues 1-25, 37-56, and 730-760; these read MFFKRSTNSRKTSANSSSDTSTSSE, AGARSQKGSVHRQSGKKARR, and MPQMNAKSKRSDSVTNGAPTLPPPAPKPEQH. A compositionally biased stretch (low complexity) spans 9–25; that stretch reads SRKTSANSSSDTSTSSE. The segment covering 45–56 has biased composition (basic residues); sequence SVHRQSGKKARR. 4 RCC1 repeats span residues 737 to 787, 788 to 838, 839 to 891, and 893 to 943; these read SKRS…VLSS, SGQL…FICS, DGSL…VLTD, and GRVL…CITE. Positions 972 to 994 are disordered; sequence LKNTEDPSSPSPSTNGSTPRVNL. RCC1 repeat units follow at residues 1034–1085 and 1087–1139; these read EGTL…ASTD and GSVF…FVQK.

Its function is as follows. Could be a guanine-nucleotide releasing factor for glo-1. May play a role in gut granule biogenesis. Regulates axon termination in PLM and ALM neurons. The polypeptide is X-linked retinitis pigmentosa GTPase regulator homolog (glo-4) (Caenorhabditis elegans).